Reading from the N-terminus, the 1039-residue chain is FERM domain-containing protein 4A (1039 aa).

The FERM domain occupies 20–322 (RRCQVHLLDD…SQHQFYLDRK (303 aa)). A necessary for interaction with CYTH1 region spans residues 358–420 (KGKIISGSSG…KLCLREAELT (63 aa)). A compositionally biased stretch (low complexity) spans 366–382 (SGSLLSSGSQESDSSQS). The interval 366–386 (SGSLLSSGSQESDSSQSAKKD) is disordered. Residues 382-416 (SAKKDMLAALKSRQEALEETLRQRLEELKKLCLRE) adopt a coiled-coil conformation. Ser530 is subject to Phosphoserine. The interval 553–680 (DEDSQVTSTI…MPSTPDLRVR (128 aa)) is disordered. A compositionally biased stretch (pro residues) spans 571 to 586 (GLPPRPPSHNRPPPPQ). The segment at 579 to 939 (HNRPPPPQSL…QWYQRSTASH (361 aa)) is necessary for tight junction and adherens junction localization; Requires for interaction with PARD3. A phosphoserine mark is found at Ser604 and Ser615. The segment covering 623–638 (VKKRSSHSHSSSHKRF) has biased composition (basic residues). Residues Ser681 and Ser711 each carry the phosphoserine modification. Disordered stretches follow at residues 713-756 (ESQG…HSSS) and 772-813 (AEDS…AGGA). Low complexity predominate over residues 788–800 (RAAGALGSASSGS). Ser800, Ser872, and Ser901 each carry phosphoserine. Disordered stretches follow at residues 879–968 (FKES…STFV) and 980–1039 (CKAT…STDE). Polar residues predominate over residues 896 to 905 (LTPSRSQILR). Over residues 912–929 (EGAHDKGAGRAAVSDELR) the composition is skewed to basic and acidic residues. Residues 946 to 966 (SHTSSTSSDSGSQYSTSSQST) are compositionally biased toward low complexity. Polar residues-rich tracts occupy residues 986–1000 (ALPQ…SSEI) and 1013–1023 (TWQTGEATENS).

As to quaternary structure, interacts (via coiled-coil domain) with CYTH1 (via coiled-coil domain). Interacts with PARD3 (via coiled-coil domain). Found in a complex with PARD3, CYTH1 and FRMD4A. Interacts with CYTH2. Interacts with CYTH3.

It localises to the cytoplasm. Its subcellular location is the cytoskeleton. The protein resides in the cell junction. It is found in the adherens junction. The protein localises to the tight junction. Scaffolding protein that regulates epithelial cell polarity by connecting ARF6 activation with the PAR3 complex. Plays a redundant role with FRMD4B in epithelial polarization. May regulate MAPT secretion by activating ARF6-signaling. This chain is FERM domain-containing protein 4A, found in Homo sapiens (Human).